We begin with the raw amino-acid sequence, 493 residues long: Cysteine--tRNA ligase (493 aa).

C29 is a Zn(2+) binding site. Positions 31–41 match the 'HIGH' region motif; it reads PTVYDFAHIGN. C227, H252, and E256 together coordinate Zn(2+). Residues 285-289 carry the 'KMSKS' region motif; sequence KMSKS. K288 contacts ATP.

The protein belongs to the class-I aminoacyl-tRNA synthetase family. Monomer. It depends on Zn(2+) as a cofactor.

It localises to the cytoplasm. It catalyses the reaction tRNA(Cys) + L-cysteine + ATP = L-cysteinyl-tRNA(Cys) + AMP + diphosphate. In Rhodopseudomonas palustris (strain HaA2), this protein is Cysteine--tRNA ligase.